A 190-amino-acid chain; its full sequence is uncharacterized protein (190 aa).

The 185-residue stretch at 1–185 folds into the Macro domain; it reads MITMFKIVRG…LALETIGLGD (185 aa).

This is an uncharacterized protein from Pyrococcus horikoshii (strain ATCC 700860 / DSM 12428 / JCM 9974 / NBRC 100139 / OT-3).